We begin with the raw amino-acid sequence, 469 residues long: Protein HEAT STRESS TOLERANT DWD 1 (469 aa).

Positions 1–15 (MGRNVKTKAKRKNKK) are enriched in basic residues. Disordered stretches follow at residues 1–29 (MGRN…SIPT) and 115–150 (DVVP…KTPN). The segment covering 124-143 (GEDEDEDDEDDSDSDDDDGD) has biased composition (acidic residues). WD repeat units follow at residues 157–197 (AHHG…NALA), 221–261 (GHKD…WAVD), 267–307 (GHTA…SPAL), 311–351 (AHNA…GGDA), 358–398 (YHKH…DEEE), and 425–464 (QGQK…NTLP).

It belongs to the WD repeat RBAP46/RBAP48/MSI1 family. In terms of assembly, probable component of CULLIN4 (CUL4) RING ligase (CRL4) complexes. Interacts with DDB1A and DDB1B. Associates with HSP90-1.

Its pathway is protein modification; protein ubiquitination. Probable substrate receptor of CRL4 E3 ligase complexes acting as negative regulators of thermotolerance by disturbing the action of HSP90-1 and by preventing the expression of heat-inducible genes (e.g. HSP14.7, HSP21, At2g03020 and WRKY28). This Arabidopsis thaliana (Mouse-ear cress) protein is Protein HEAT STRESS TOLERANT DWD 1.